The chain runs to 196 residues: NAD(P)H-quinone oxidoreductase subunit I (196 aa).

4Fe-4S ferredoxin-type domains are found at residues 54–83 and 94–123; these read GRIH…VDWV and KHYS…VTEE. Positions 63, 66, 69, 73, 103, 106, 109, and 113 each coordinate [4Fe-4S] cluster. Positions 174–196 are disordered; it reads PAGAQRAGERPEAIANTAKSSEN.

Belongs to the complex I 23 kDa subunit family. NDH-1 is composed of at least 11 different subunits. [4Fe-4S] cluster serves as cofactor.

The protein localises to the cellular thylakoid membrane. It carries out the reaction a plastoquinone + NADH + (n+1) H(+)(in) = a plastoquinol + NAD(+) + n H(+)(out). It catalyses the reaction a plastoquinone + NADPH + (n+1) H(+)(in) = a plastoquinol + NADP(+) + n H(+)(out). In terms of biological role, NDH-1 shuttles electrons from an unknown electron donor, via FMN and iron-sulfur (Fe-S) centers, to quinones in the respiratory and/or the photosynthetic chain. The immediate electron acceptor for the enzyme in this species is believed to be plastoquinone. Couples the redox reaction to proton translocation, and thus conserves the redox energy in a proton gradient. The polypeptide is NAD(P)H-quinone oxidoreductase subunit I (Thermosynechococcus vestitus (strain NIES-2133 / IAM M-273 / BP-1)).